Reading from the N-terminus, the 254-residue chain is 7-cyano-7-deazaguanine synthase (254 aa).

An ATP-binding site is contributed by 30–40; sequence YSGGQDSATCL. Residues cysteine 218, cysteine 233, cysteine 236, and cysteine 239 each coordinate Zn(2+).

Belongs to the QueC family. The cofactor is Zn(2+).

The catalysed reaction is 7-carboxy-7-deazaguanine + NH4(+) + ATP = 7-cyano-7-deazaguanine + ADP + phosphate + H2O + H(+). Its pathway is purine metabolism; 7-cyano-7-deazaguanine biosynthesis. In terms of biological role, catalyzes the ATP-dependent conversion of 7-carboxy-7-deazaguanine (CDG) to 7-cyano-7-deazaguanine (preQ(0)). The polypeptide is 7-cyano-7-deazaguanine synthase (Zymomonas mobilis subsp. mobilis (strain ATCC 31821 / ZM4 / CP4)).